The following is a 400-amino-acid chain: Tryptophan synthase beta chain (400 aa).

At Lys-92 the chain carries N6-(pyridoxal phosphate)lysine.

The protein belongs to the TrpB family. In terms of assembly, tetramer of two alpha and two beta chains. Pyridoxal 5'-phosphate is required as a cofactor.

It carries out the reaction (1S,2R)-1-C-(indol-3-yl)glycerol 3-phosphate + L-serine = D-glyceraldehyde 3-phosphate + L-tryptophan + H2O. Its pathway is amino-acid biosynthesis; L-tryptophan biosynthesis; L-tryptophan from chorismate: step 5/5. In terms of biological role, the beta subunit is responsible for the synthesis of L-tryptophan from indole and L-serine. In Leptospira borgpetersenii serovar Hardjo-bovis (strain JB197), this protein is Tryptophan synthase beta chain.